The sequence spans 1088 residues: RNA-directed RNA polymerase (1088 aa).

Positions 501–687 (LSYGDVTRFL…AKRYIAGGKI (187 aa)) constitute a RdRp catalytic domain.

Belongs to the reoviridae RNA-directed RNA polymerase family. Interacts with VP3 (Potential). Interacts with VP2; this interaction activates VP1. Interacts with NSP5; this interaction is probably necessary for the formation of functional virus factories. Interacts with NSP2; this interaction is weak. Requires Mg(2+) as cofactor.

The protein localises to the virion. The catalysed reaction is RNA(n) + a ribonucleoside 5'-triphosphate = RNA(n+1) + diphosphate. RNA-directed RNA polymerase that is involved in both transcription and genome replication. Together with VP3 capping enzyme, forms an enzyme complex positioned near the channels situated at each of the five-fold vertices of the core. Following infection, the outermost layer of the virus is lost, leaving a double-layered particle (DLP) made up of the core and VP6 shell. VP1 then catalyzes the transcription of fully conservative plus-strand genomic RNAs that are extruded through the DLP's channels into the cytoplasm where they function as mRNAs for translation of viral proteins. One copy of each of the viral (+)RNAs is also recruited during core assembly, together with newly synthesized polymerase complexes and VP2. The polymerase of these novo-formed particles catalyzes the synthesis of complementary minus-strands leading to dsRNA formation. To do so, the polymerase specifically recognizes and binds 4 bases 5'-UGUG-3' in the conserved 3'-sequence of plus-strand RNA templates. VP2 presumably activates the autoinhibited VP1-RNA complex to coordinate packaging and genome replication. Once dsRNA synthesis is complete, the polymerase switches to the transcriptional mode, thus providing secondary transcription. This chain is RNA-directed RNA polymerase, found in Rotavirus A (strain RVA/Pig/United States/Gottfried/1983/G4P2B[6]) (RV-A).